We begin with the raw amino-acid sequence, 113 residues long: U11-theraphotoxin-Hhn1u (113 aa).

Positions 1–21 are cleaved as a signal peptide; the sequence is MNTVRVTFLLVFVLAVSLGQA. A propeptide spanning residues 22–74 is cleaved from the precursor; that stretch reads DKDENRMEMQEKTEQGKSYLDFAENLLLQKLEELEAKLLEEDSEESRNSRQKR. Cystine bridges form between Cys75/Cys90, Cys82/Cys95, and Cys89/Cys110.

The protein belongs to the neurotoxin 14 (magi-1) family. 01 (HNTX-16) subfamily. In terms of tissue distribution, expressed by the venom gland.

The protein localises to the secreted. Its function is as follows. Probable ion channel inhibitor. This is U11-theraphotoxin-Hhn1u from Cyriopagopus hainanus (Chinese bird spider).